A 420-amino-acid polypeptide reads, in one-letter code: Tubulin-specific chaperone C (420 aa).

Positions 9 to 142 (NNNNDEENSK…QIDKSKEKYM (134 aa)) form a coiled coil. A compositionally biased stretch (basic and acidic residues) spans 31 to 49 (KQRLQSKLEKREISNKEQI). 3 disordered regions span residues 31 to 52 (KQRL…IDQS), 138 to 193 (KEKY…NNNK), and 222 to 257 (EIGN…NNNN). Composition is skewed to low complexity over residues 172 to 192 (ETFN…NNNN) and 228 to 257 (INNN…NNNN). The C-CAP/cofactor C-like domain occupies 216 to 366 (PPKKEEEIGN…LKQQQQQQQQ (151 aa)).

This sequence belongs to the TBCC family. Supercomplex made of cofactors A to E. Cofactors A and D function by capturing and stabilizing tubulin in a quasi-native conformation. Cofactor E binds to the cofactor D-tubulin complex; interaction with cofactor C then causes the release of tubulin polypeptides that are committed to the native state.

Tubulin-folding protein; involved in the final step of the tubulin folding pathway. This chain is Tubulin-specific chaperone C (tbcc), found in Dictyostelium discoideum (Social amoeba).